The sequence spans 461 residues: Pup--protein ligase (461 aa).

Residue Glu9 coordinates Mg(2+). Arg53 contacts ATP. Residue Tyr55 coordinates Mg(2+). Catalysis depends on Asp57, which acts as the Proton acceptor. A Mg(2+)-binding site is contributed by Glu63. Residues Thr66 and Trp420 each contribute to the ATP site.

This sequence belongs to the Pup ligase/Pup deamidase family. Pup-conjugating enzyme subfamily.

It catalyses the reaction ATP + [prokaryotic ubiquitin-like protein]-L-glutamate + [protein]-L-lysine = ADP + phosphate + N(6)-([prokaryotic ubiquitin-like protein]-gamma-L-glutamyl)-[protein]-L-lysine.. It participates in protein degradation; proteasomal Pup-dependent pathway. Its pathway is protein modification; protein pupylation. Its function is as follows. Catalyzes the covalent attachment of the prokaryotic ubiquitin-like protein modifier Pup to the proteasomal substrate proteins, thereby targeting them for proteasomal degradation. This tagging system is termed pupylation. The ligation reaction involves the side-chain carboxylate of the C-terminal glutamate of Pup and the side-chain amino group of a substrate lysine. The polypeptide is Pup--protein ligase (Renibacterium salmoninarum (strain ATCC 33209 / DSM 20767 / JCM 11484 / NBRC 15589 / NCIMB 2235)).